The following is a 542-amino-acid chain: CTP synthase (542 aa).

The tract at residues 1-265 is amidoligase domain; sequence MARYVFITGG…DDEVLAAFGI (265 aa). Ser13 contacts CTP. Ser13 provides a ligand contact to UTP. ATP contacts are provided by residues 14-19 and Asp71; that span reads SLGKGI. Residues Asp71 and Glu139 each contribute to the Mg(2+) site. CTP-binding positions include 146 to 148, 186 to 191, and Lys222; these read DIE and KTKPTQ. Residues 186–191 and Lys222 contribute to the UTP site; that span reads KTKPTQ. One can recognise a Glutamine amidotransferase type-1 domain in the interval 291-541; sequence TIAIVGKYTG…IEAATEQSRL (251 aa). Gly353 contributes to the L-glutamine binding site. Cys380 acts as the Nucleophile; for glutamine hydrolysis in catalysis. Residues 381–384, Glu404, and Arg469 each bind L-glutamine; that span reads FGMQ. Residues His514 and Glu516 contribute to the active site.

The protein belongs to the CTP synthase family. In terms of assembly, homotetramer.

The catalysed reaction is UTP + L-glutamine + ATP + H2O = CTP + L-glutamate + ADP + phosphate + 2 H(+). It catalyses the reaction L-glutamine + H2O = L-glutamate + NH4(+). The enzyme catalyses UTP + NH4(+) + ATP = CTP + ADP + phosphate + 2 H(+). It functions in the pathway pyrimidine metabolism; CTP biosynthesis via de novo pathway; CTP from UDP: step 2/2. With respect to regulation, allosterically activated by GTP, when glutamine is the substrate; GTP has no effect on the reaction when ammonia is the substrate. The allosteric effector GTP functions by stabilizing the protein conformation that binds the tetrahedral intermediate(s) formed during glutamine hydrolysis. Inhibited by the product CTP, via allosteric rather than competitive inhibition. Catalyzes the ATP-dependent amination of UTP to CTP with either L-glutamine or ammonia as the source of nitrogen. Regulates intracellular CTP levels through interactions with the four ribonucleotide triphosphates. The protein is CTP synthase of Rhizobium leguminosarum bv. trifolii (strain WSM2304).